The chain runs to 311 residues: Protein translocase subunit SecF (311 aa).

The next 6 helical transmembrane spans lie at 19–39 (AIYA…TQGL), 142–162 (MLAM…RFEL), 166–186 (LGAV…FSVL), 192–212 (LVVV…TIVV), 245–265 (ITSL…GAVI), and 272–292 (LLFG…PLVL).

This sequence belongs to the SecD/SecF family. SecF subfamily. As to quaternary structure, forms a complex with SecD. Part of the essential Sec protein translocation apparatus which comprises SecA, SecYEG and auxiliary proteins SecDF-YajC and YidC.

The protein resides in the cell inner membrane. Part of the Sec protein translocase complex. Interacts with the SecYEG preprotein conducting channel. SecDF uses the proton motive force (PMF) to complete protein translocation after the ATP-dependent function of SecA. The polypeptide is Protein translocase subunit SecF (Magnetococcus marinus (strain ATCC BAA-1437 / JCM 17883 / MC-1)).